The following is a 187-amino-acid chain: Large ribosomal subunit protein uL22 (187 aa).

Basic and acidic residues predominate over residues 159–171 (VSKPTDDAAPKVK). Residues 159 to 187 (VSKPTDDAAPKVKKESKRKQRRQLARGEF) are disordered. Positions 172–187 (KESKRKQRRQLARGEF) are enriched in basic residues.

Belongs to the universal ribosomal protein uL22 family.

This is Large ribosomal subunit protein uL22 (rpl-17) from Caenorhabditis elegans.